Reading from the N-terminus, the 270-residue chain is Fibroblast growth factor 5 (270 aa).

An N-terminal signal peptide occupies residues 1-20 (MSLSLLLLLFLSHLILSAWA). Positions 26 to 84 (LAPKGQPGPAATGRNPGGAGGSSTSGGTTSSSSSSVSSAPGASPGIRGSGSEQGSFQWS) are disordered. The segment covering 40 to 49 (NPGGAGGSST) has biased composition (gly residues). Residues 50-70 (SGGTTSSSSSSVSSAPGASPG) are compositionally biased toward low complexity. A compositionally biased stretch (polar residues) spans 75–84 (GSEQGSFQWS). The N-linked (GlcNAc...) asparagine glycan is linked to N112. Residues 237 to 257 (EKKKPPSHVKPKVPLSAPRKS) are disordered.

Belongs to the heparin-binding growth factors family. Interacts with FGFR1 and FGFR2. Affinity between fibroblast growth factors (FGFs) and their receptors is increased by heparan sulfate glycosaminoglycans that function as coreceptors.

The protein localises to the secreted. In terms of biological role, plays an important role in the regulation of cell proliferation and cell differentiation. Required for normal regulation of the hair growth cycle. Functions as an inhibitor of hair elongation by promoting progression from anagen, the growth phase of the hair follicle, into catagen the apoptosis-induced regression phase. The sequence is that of Fibroblast growth factor 5 (FGF5) from Canis lupus familiaris (Dog).